The primary structure comprises 179 residues: Inorganic pyrophosphatase (179 aa).

Lys30, Arg44, and Tyr56 together coordinate substrate. Mg(2+)-binding residues include Asp66, Asp71, and Asp103. A substrate-binding site is contributed by Tyr142.

This sequence belongs to the PPase family. Homohexamer. It depends on Mg(2+) as a cofactor.

The protein localises to the cytoplasm. It carries out the reaction diphosphate + H2O = 2 phosphate + H(+). Catalyzes the hydrolysis of inorganic pyrophosphate (PPi) forming two phosphate ions. The protein is Inorganic pyrophosphatase of Rhodospirillum rubrum (strain ATCC 11170 / ATH 1.1.1 / DSM 467 / LMG 4362 / NCIMB 8255 / S1).